A 62-amino-acid polypeptide reads, in one-letter code: Large ribosomal subunit protein eL24 (62 aa).

Zn(2+) contacts are provided by C7, C10, C33, and C37. The segment at 7-37 (CDYCGDDIEPGTGTMFVHNDGSTVHFCSAKC) adopts a C4-type zinc-finger fold.

This sequence belongs to the eukaryotic ribosomal protein eL24 family. As to quaternary structure, part of the 50S ribosomal subunit. Forms a cluster with proteins L3 and L14. Zn(2+) is required as a cofactor.

Functionally, binds to the 23S rRNA. The sequence is that of Large ribosomal subunit protein eL24 from Halobacterium salinarum (strain ATCC 29341 / DSM 671 / R1).